The primary structure comprises 207 residues: Octanoyltransferase (207 aa).

A BPL/LPL catalytic domain is found at Gly-27–Gln-202. Substrate-binding positions include Arg-66–His-73, Ser-133–Gly-135, and Gly-146–Ser-148. Cys-164 serves as the catalytic Acyl-thioester intermediate.

It belongs to the LipB family.

It localises to the cytoplasm. It carries out the reaction octanoyl-[ACP] + L-lysyl-[protein] = N(6)-octanoyl-L-lysyl-[protein] + holo-[ACP] + H(+). Its pathway is protein modification; protein lipoylation via endogenous pathway; protein N(6)-(lipoyl)lysine from octanoyl-[acyl-carrier-protein]: step 1/2. Functionally, catalyzes the transfer of endogenously produced octanoic acid from octanoyl-acyl-carrier-protein onto the lipoyl domains of lipoate-dependent enzymes. Lipoyl-ACP can also act as a substrate although octanoyl-ACP is likely to be the physiological substrate. The chain is Octanoyltransferase from Laribacter hongkongensis (strain HLHK9).